The primary structure comprises 616 residues: UvrABC system protein C (616 aa).

The 75-residue stretch at alanine 11–valine 85 folds into the GIY-YIG domain. The region spanning alanine 194–leucine 229 is the UVR domain.

Belongs to the UvrC family. As to quaternary structure, interacts with UvrB in an incision complex.

The protein localises to the cytoplasm. Functionally, the UvrABC repair system catalyzes the recognition and processing of DNA lesions. UvrC both incises the 5' and 3' sides of the lesion. The N-terminal half is responsible for the 3' incision and the C-terminal half is responsible for the 5' incision. This chain is UvrABC system protein C, found in Deinococcus geothermalis (strain DSM 11300 / CIP 105573 / AG-3a).